We begin with the raw amino-acid sequence, 239 residues long: uncharacterized protein (239 aa).

Residues 104-127 are disordered; the sequence is LPATSQSSQPKSTNSSTESSSIGQ. Over residues 107-127 the composition is skewed to low complexity; that stretch reads TSQSSQPKSTNSSTESSSIGQ. Positions 134 to 202 form a coiled coil; it reads ENEINLNKNK…HFIQNNQESF (69 aa). The helical transmembrane segment at 211–231 threads the bilayer; the sequence is VKIGSAFIIYIFYNVLFFIIV.

Its subcellular location is the membrane. This is an uncharacterized protein from Dictyostelium discoideum (Social amoeba).